Here is a 218-residue protein sequence, read N- to C-terminus: MTSLSREALLVRAALEAEGLETPLVANALDGQQKREKIEGHMRAIMETLGLDLADDSLAETPHRIAKMYVNEIFSGLDYATFPKVTVIENKMKVDEMIMVRDISLTSTCEHHFVTIDGLAHVAYIPRGKVIGLSKINRIVQFFARRPQVQERLTQQILLALQTLLGTKDVAISIKATHFCVKARGVMDSTSYTTTTSLGGVFKTQPDTRAEFLAGLKR.

3 residues coordinate Zn(2+): Cys-109, His-112, and Cys-180.

Belongs to the GTP cyclohydrolase I family. In terms of assembly, toroid-shaped homodecamer, composed of two pentamers of five dimers.

It catalyses the reaction GTP + H2O = 7,8-dihydroneopterin 3'-triphosphate + formate + H(+). It participates in cofactor biosynthesis; 7,8-dihydroneopterin triphosphate biosynthesis; 7,8-dihydroneopterin triphosphate from GTP: step 1/1. This chain is GTP cyclohydrolase 1, found in Aeromonas hydrophila subsp. hydrophila (strain ATCC 7966 / DSM 30187 / BCRC 13018 / CCUG 14551 / JCM 1027 / KCTC 2358 / NCIMB 9240 / NCTC 8049).